The following is a 323-amino-acid chain: Alpha-tubulin N-acetyltransferase 1 (323 aa).

The N-acetyltransferase domain occupies 1 to 190 (MEFPFDVDAL…NNFVIFEGFF (190 aa)). Position 56 is an N6-acetyllysine; by autocatalysis (K56). 124 to 137 (FYIHESVQRHGHGR) contacts acetyl-CoA. At K146 the chain carries N6-acetyllysine; by autocatalysis. Residue 160-169 (SQKLLKFLNK) coordinates acetyl-CoA. The disordered stretch occupies residues 196–239 (PPAPSLRATRHSRAAAVDPTPTAPARKLPPKRAEGDIKPYSSSD). The segment covering 209–220 (AAAVDPTPTAPA) has biased composition (low complexity). Basic and acidic residues predominate over residues 226 to 239 (KRAEGDIKPYSSSD). Residues K233 and K244 each carry the N6-acetyllysine; by autocatalysis modification. The tract at residues 252-287 (PLNRAPRRATPPAHPPPRSSSLGNSPERGPLRPFVP) is disordered. Residues S272 and S276 each carry the phosphoserine modification. R305 carries the post-translational modification Asymmetric dimethylarginine. At S315 the chain carries Phosphoserine. Position 323 is an omega-N-methylarginine (R323).

It belongs to the acetyltransferase ATAT1 family. Component of the BBSome complex. Interacts with AP2 alpha-adaptins, including AP2A2, but not with AP1 gamma-adaptin (AP1G1/AP1G2); this interaction is required for efficient alpha-tubulin acetylation, hence clathrin-coated pits are sites of microtubule acetylation. In terms of processing, autoacetylation strongly increases tubulin acetylation.

Its subcellular location is the cytoplasm. It is found in the membrane. The protein localises to the clathrin-coated pit. It localises to the cell junction. The protein resides in the focal adhesion. Its subcellular location is the cell projection. It is found in the axon. The protein localises to the cytoskeleton. It localises to the spindle. The enzyme catalyses L-lysyl-[alpha-tubulin] + acetyl-CoA = N(6)-acetyl-L-lysyl-[alpha-tubulin] + CoA + H(+). Its function is as follows. Specifically acetylates 'Lys-40' in alpha-tubulin on the lumenal side of microtubules. Promotes microtubule destabilization and accelerates microtubule dynamics; this activity may be independent of acetylation activity. Acetylates alpha-tubulin with a slow enzymatic rate, due to a catalytic site that is not optimized for acetyl transfer. Enters the microtubule through each end and diffuses quickly throughout the lumen of microtubules. Acetylates only long/old microtubules because of its slow acetylation rate since it does not have time to act on dynamically unstable microtubules before the enzyme is released. Required for normal sperm flagellar function. Promotes directional cell locomotion and chemotaxis, through AP2A2-dependent acetylation of alpha-tubulin at clathrin-coated pits that are concentrated at the leading edge of migrating cells. May facilitate primary cilium assembly. This Macaca mulatta (Rhesus macaque) protein is Alpha-tubulin N-acetyltransferase 1.